We begin with the raw amino-acid sequence, 346 residues long: Short-wave-sensitive opsin 1 (346 aa).

Over 1-31 (MSGEDDFYLFQNISSVGPWDGPQYHLAPVWA) the chain is Extracellular. N12 carries N-linked (GlcNAc...) asparagine glycosylation. A helical membrane pass occupies residues 32-56 (FRLQAAFMGFVFFVGTPLNAIVLVA). Over 57–68 (TLHYKKLRQPLN) the chain is Cytoplasmic. The helical transmembrane segment at 69 to 94 (YILVNVSLGGFLFCIFSVFTVFIASC) threads the bilayer. The Extracellular portion of the chain corresponds to 95-108 (HGYFLFGRHVCALE). A disulfide bridge connects residues C105 and C182. The helical transmembrane segment at 109 to 128 (AFLGSVAGLVTGWSLAFLAF) threads the bilayer. Residues 129-147 (ERYVVICKPFGSIRFNSKH) lie on the Cytoplasmic side of the membrane. Residues 148 to 171 (ALMVVLATWIIGIGVSIPPFFGWS) form a helical membrane-spanning segment. The Extracellular portion of the chain corresponds to 172–197 (RFIPEGLQCSCGPDWYTVGTKYRSEY). A helical membrane pass occupies residues 198 to 225 (YTWFLFIFCFIIPLSLICFSYSQLLRTL). Residues 226–247 (RAVAAQQQESATTQKAEREVSH) are Cytoplasmic-facing. A helical membrane pass occupies residues 248 to 271 (MVVVMVGSFCLCYVPYAALAMYMV). Residues 272–279 (NNRNHGLD) are Extracellular-facing. The helical transmembrane segment at 280-304 (LRLVTIPAFFSKSSCVYNPIIYCFM) threads the bilayer. K291 is subject to N6-(retinylidene)lysine. Topologically, residues 305–346 (NKQFRACILEMVCRKPMADESDVSGSQKTEVSTVSSSKVGPH) are cytoplasmic. Residues 324-346 (ESDVSGSQKTEVSTVSSSKVGPH) form a disordered region. Residues 330-346 (SQKTEVSTVSSSKVGPH) are compositionally biased toward low complexity.

It belongs to the G-protein coupled receptor 1 family. Opsin subfamily. Phosphorylated on some or all of the serine and threonine residues present in the C-terminal region. As to expression, expressed in the inner and outer segments of cone photoreceptor cells in the retina (at protein level).

It is found in the cell membrane. It localises to the photoreceptor inner segment. The protein localises to the cell projection. Its subcellular location is the cilium. The protein resides in the photoreceptor outer segment. It is found in the cytoplasm. It localises to the perinuclear region. Its function is as follows. Visual pigments are the light-absorbing molecules that mediate vision. They consist of an apoprotein, opsin, covalently linked to cis-retinal. Required for the maintenance of cone outer segment organization in the ventral retina, but not essential for the maintenance of functioning cone photoreceptors. Involved in ensuring correct abundance and localization of retinal membrane proteins. May increase spectral sensitivity in dim light. The polypeptide is Short-wave-sensitive opsin 1 (Opn1sw) (Mus musculus (Mouse)).